The sequence spans 180 residues: Large ribosomal subunit protein bL17 (180 aa).

The segment at 134-180 is disordered; sequence AQAKAKKAAAMPTEESEAKPAEEGDVVGASEPDAKAPEEPPAEAPEN.

It belongs to the bacterial ribosomal protein bL17 family. In terms of assembly, part of the 50S ribosomal subunit. Contacts protein L32.

The protein is Large ribosomal subunit protein bL17 of Mycobacterium tuberculosis (strain ATCC 25177 / H37Ra).